The sequence spans 892 residues: Nitrogen assimilation transcription factor nirA (892 aa).

The disordered stretch occupies residues 1–32 (MGEKLDPELSSDGPHTKSSSKGQGTSTDNAPA). Over residues 16–27 (TKSSSKGQGTST) the composition is skewed to low complexity. A DNA-binding region (zn(2)-C6 fungal-type) is located at residues 42–70 (CIACRRRKSKCDGNLPSCAACSSVYHTTC). Disordered regions lie at residues 646-714 (GPWD…SGPV), 731-761 (AHNE…SAQE), and 842-892 (PNIP…SFQR). Positions 649–674 (DQAASPSTTSDSPPSVSSQSVVATTD) are enriched in low complexity. Composition is skewed to polar residues over residues 675 to 714 (LSQP…SGPV), 746 to 761 (VSTS…SAQE), and 876 to 892 (NVNS…SFQR).

It localises to the nucleus. Its function is as follows. Pathway-specific regulatory gene of nitrate assimilation; it activates the transcription of the genes for nitrate and nitrite reductases (niaD and niiA). The chain is Nitrogen assimilation transcription factor nirA (nirA) from Emericella nidulans (strain FGSC A4 / ATCC 38163 / CBS 112.46 / NRRL 194 / M139) (Aspergillus nidulans).